A 211-amino-acid chain; its full sequence is Bcl-2-related ovarian killer protein homolog B (211 aa).

The short motif at 32 to 44 (KELCRDFIHSRIT) is the BH4 element. The BH3 motif lies at 67–83 (VSVVLLKLGDELECMRP). The BH1 motif lies at 113–132 (EVIAMGITWGKVVAIYAVAA). The short motif at 165-179 (WLKKRGGWVDILKCV) is the BH2 element. The chain crosses the membrane as a helical span at residues 190–210 (WLSTAVLTWREFIKTMYVYLT).

The protein belongs to the Bcl-2 family. As to expression, expressed strongly in ovary and more weakly in eye. Little expression in other tissues examined.

The protein localises to the membrane. Its function is as follows. May play a role in apoptosis. Does not appear to show pro-apoptotic activity when expressed ectopically in early embryos. The polypeptide is Bcl-2-related ovarian killer protein homolog B (bokb) (Danio rerio (Zebrafish)).